Reading from the N-terminus, the 496-residue chain is E3 ubiquitin-protein ligase XIAP (496 aa).

BIR repeat units lie at residues 26–93 (EFNR…CRFI), 163–230 (EEAR…CFFV), and 264–329 (YDAR…CKYL). Zn(2+) is bound by residues cysteine 299, cysteine 302, and histidine 319. Lysine 321 is covalently cross-linked (Glycyl lysine isopeptide (Lys-Gly) (interchain with G-Cter in ubiquitin)). Cysteine 326 lines the Zn(2+) pocket. Residue lysine 327 forms a Glycyl lysine isopeptide (Lys-Gly) (interchain with G-Cter in ubiquitin) linkage. Residue cysteine 449 is modified to S-nitrosocysteine. The RING-type zinc finger occupies 449–484 (CKICMDRNIAIVFVPCGHLVTCKQCAEAVDKCPMCC).

It belongs to the IAP family. Monomer, and homodimer. Interacts (via BIR3 domain) with DIABLO/SMAC; the interaction inhibits apoptotic suppressor activity. Interacts with HTRA2/PRSS25; the interaction inhibits apoptotic suppressor activity. Interacts with TAB1/MAP3K7IP1 and AIFM1. Interaction with DIABLO/SMAC hinders binding of TAB1/MAP3K7IP1 and AIFM1. Interacts with TCF25 and COMMD1. Interacts (via BIR3 domain) with SEPTIN4. Interacts with RIP1, RIP2, RIP3, RIP4, CCS and USP19. Interacts (via BIR 2 domain and BIR 3 domain) with HAX1 (via C-terminus) and this interaction blocks ubiquitination of XIAP/BIRC4. Interacts with the monomeric form of BIRC5/survivin. Interacts with TLE3 and TCF7L2/TCF4. Interacts (via BIR 3 and RING domains) with PDCL3. In terms of processing, S-Nitrosylation down-regulates its E3 ubiquitin-protein ligase activity. Post-translationally, autoubiquitinated. Ubiquitinated by TRIM32; leading to proteasomal degradation.

It is found in the cytoplasm. Its subcellular location is the nucleus. It carries out the reaction S-ubiquitinyl-[E2 ubiquitin-conjugating enzyme]-L-cysteine + [acceptor protein]-L-lysine = [E2 ubiquitin-conjugating enzyme]-L-cysteine + N(6)-ubiquitinyl-[acceptor protein]-L-lysine.. Multi-functional protein which regulates not only caspases and apoptosis, but also modulates inflammatory signaling and immunity, copper homeostasis, mitogenic kinase signaling, cell proliferation, as well as cell invasion and metastasis. Acts as a direct caspase inhibitor. Directly bind to the active site pocket of CASP3 and CASP7 and obstructs substrate entry. Inactivates CASP9 by keeping it in a monomeric, inactive state. Acts as an E3 ubiquitin-protein ligase regulating NF-kappa-B signaling and the target proteins for its E3 ubiquitin-protein ligase activity include: RIPK1, RIPK2, MAP3K2/MEKK2, DIABLO/SMAC, AIFM1, CCS, PTEN and BIRC5/survivin. Acts as an important regulator of innate immunity by mediating 'Lys-63'-linked polyubiquitination of RIPK2 downstream of NOD1 and NOD2, thereby transforming RIPK2 into a scaffolding protein for downstream effectors, ultimately leading to activation of the NF-kappa-B and MAP kinases signaling. 'Lys-63'-linked polyubiquitination of RIPK2 also promotes recruitment of the LUBAC complex to RIPK2. Regulates the BMP signaling pathway and the SMAD and MAP3K7/TAK1 dependent pathways leading to NF-kappa-B and JNK activation. Ubiquitination of CCS leads to enhancement of its chaperone activity toward its physiologic target, SOD1, rather than proteasomal degradation. Ubiquitination of MAP3K2/MEKK2 and AIFM1 does not lead to proteasomal degradation. Plays a role in copper homeostasis by ubiquitinating COMMD1 and promoting its proteasomal degradation. Can also function as E3 ubiquitin-protein ligase of the NEDD8 conjugation pathway, targeting effector caspases for neddylation and inactivation. Ubiquitinates and therefore mediates the proteasomal degradation of BCL2 in response to apoptosis. Protects cells from spontaneous formation of the ripoptosome, a large multi-protein complex that has the capability to kill cancer cells in a caspase-dependent and caspase-independent manner. Suppresses ripoptosome formation by ubiquitinating RIPK1 and CASP8. Acts as a positive regulator of Wnt signaling and ubiquitinates TLE1, TLE2, TLE3, TLE4 and AES. Ubiquitination of TLE3 results in inhibition of its interaction with TCF7L2/TCF4 thereby allowing efficient recruitment and binding of the transcriptional coactivator beta-catenin to TCF7L2/TCF4 that is required to initiate a Wnt-specific transcriptional program. The sequence is that of E3 ubiquitin-protein ligase XIAP (Xiap) from Rattus norvegicus (Rat).